The primary structure comprises 957 residues: Glycine dehydrogenase (decarboxylating) (957 aa).

An N6-(pyridoxal phosphate)lysine modification is found at lysine 708.

This sequence belongs to the GcvP family. In terms of assembly, the glycine cleavage system is composed of four proteins: P, T, L and H. Requires pyridoxal 5'-phosphate as cofactor.

It carries out the reaction N(6)-[(R)-lipoyl]-L-lysyl-[glycine-cleavage complex H protein] + glycine + H(+) = N(6)-[(R)-S(8)-aminomethyldihydrolipoyl]-L-lysyl-[glycine-cleavage complex H protein] + CO2. The glycine cleavage system catalyzes the degradation of glycine. The P protein binds the alpha-amino group of glycine through its pyridoxal phosphate cofactor; CO(2) is released and the remaining methylamine moiety is then transferred to the lipoamide cofactor of the H protein. The sequence is that of Glycine dehydrogenase (decarboxylating) from Enterobacter sp. (strain 638).